The primary structure comprises 373 residues: MRIIVSGGGTGGHIYPALALVESLLKHEPDSKVLYIGSFRGLEGSIVPKTGLDFKQLHVQGFSRSLSLTNFKTVNLFIKAVKKSKHIIHDFKPDIVLGTGGYVSGAVLYAAQRLRIPTVINEQNSIAGVTNKFLSRGADRIAISFPHAANQFPKDKVVLTGNPRGQQVFEKKGDFSLTEFDLDPKLPTVLIFGGSGGALKLNSAVVNFANRFSEQKKFQAIFVTGRKYFDSVSNQLADLKINSSNFVVLPYLDNMDDVLPKIDLLISRSGATTLAEITALGIPSILIPSPNVTANHQEKNARQLEERGAAEVILESDLSSAMLYHDLSELLSHKSKLESMAQAAKKLGHPDAADKLYKLLVQVINERKQETTK.

Residues 10-12 (TGG), asparagine 124, serine 195, and glutamine 297 each bind UDP-N-acetyl-alpha-D-glucosamine.

It belongs to the glycosyltransferase 28 family. MurG subfamily.

It is found in the cell membrane. It carries out the reaction Mur2Ac(oyl-L-Ala-gamma-D-Glu-L-Lys-D-Ala-D-Ala)-di-trans,octa-cis-undecaprenyl diphosphate + UDP-N-acetyl-alpha-D-glucosamine = beta-D-GlcNAc-(1-&gt;4)-Mur2Ac(oyl-L-Ala-gamma-D-Glu-L-Lys-D-Ala-D-Ala)-di-trans,octa-cis-undecaprenyl diphosphate + UDP + H(+). It functions in the pathway cell wall biogenesis; peptidoglycan biosynthesis. Its function is as follows. Cell wall formation. Catalyzes the transfer of a GlcNAc subunit on undecaprenyl-pyrophosphoryl-MurNAc-pentapeptide (lipid intermediate I) to form undecaprenyl-pyrophosphoryl-MurNAc-(pentapeptide)GlcNAc (lipid intermediate II). The chain is UDP-N-acetylglucosamine--N-acetylmuramyl-(pentapeptide) pyrophosphoryl-undecaprenol N-acetylglucosamine transferase from Oenococcus oeni (strain ATCC BAA-331 / PSU-1).